A 120-amino-acid polypeptide reads, in one-letter code: NAD(P)H-quinone oxidoreductase subunit 3, chloroplastic (120 aa).

The next 3 membrane-spanning stretches (helical) occupy residues 9–29, 64–84, and 88–108; these read IFWAFLIISSVIPILAFLISG, MFALVFVVFDVETVFLYPWAM, and VLGVSVFIEALIFVLILIVGL.

It belongs to the complex I subunit 3 family. In terms of assembly, NDH is composed of at least 16 different subunits, 5 of which are encoded in the nucleus.

The protein localises to the plastid. It localises to the chloroplast thylakoid membrane. The enzyme catalyses a plastoquinone + NADH + (n+1) H(+)(in) = a plastoquinol + NAD(+) + n H(+)(out). The catalysed reaction is a plastoquinone + NADPH + (n+1) H(+)(in) = a plastoquinol + NADP(+) + n H(+)(out). NDH shuttles electrons from NAD(P)H:plastoquinone, via FMN and iron-sulfur (Fe-S) centers, to quinones in the photosynthetic chain and possibly in a chloroplast respiratory chain. The immediate electron acceptor for the enzyme in this species is believed to be plastoquinone. Couples the redox reaction to proton translocation, and thus conserves the redox energy in a proton gradient. The protein is NAD(P)H-quinone oxidoreductase subunit 3, chloroplastic of Populus alba (White poplar).